A 199-amino-acid chain; its full sequence is ATP synthase subunit a (199 aa).

The next 5 helical transmembrane spans lie at Asn2 to Phe22, Val53 to Tyr73, Met80 to Ile100, Leu141 to Leu161, and Trp169 to Phe189.

It belongs to the ATPase A chain family. In terms of assembly, F-type ATPases have 2 components, CF(1) - the catalytic core - and CF(0) - the membrane proton channel. CF(1) has five subunits: alpha(3), beta(3), gamma(1), delta(1), epsilon(1). CF(0) has three main subunits: a, b and c.

The protein resides in the mitochondrion inner membrane. Its function is as follows. Mitochondrial membrane ATP synthase (F(1)F(0) ATP synthase or Complex V) produces ATP from ADP in the presence of a proton gradient across the membrane which is generated by electron transport complexes of the respiratory chain. F-type ATPases consist of two structural domains, F(1) - containing the extramembraneous catalytic core and F(0) - containing the membrane proton channel, linked together by a central stalk and a peripheral stalk. During catalysis, ATP synthesis in the catalytic domain of F(1) is coupled via a rotary mechanism of the central stalk subunits to proton translocation. Key component of the proton channel; it may play a direct role in the translocation of protons across the membrane. This is ATP synthase subunit a (atp6) from Caenorhabditis briggsae.